A 355-amino-acid chain; its full sequence is 45 kDa calcium-binding protein (355 aa).

An N-terminal signal peptide occupies residues 1–29 (MASRQAPLCGLAPCCLWLLGVVLLMNASA). Residue N33 is glycosylated (N-linked (GlcNAc...) asparagine). EF-hand domains are found at residues 91–126 (KSRR…KTAE) and 130–165 (EAVA…TKGH). Position 92 is a phosphoserine (S92). Ca(2+) contacts are provided by D104, N106, D108, R110, E115, D143, D145, D147, H149, and E154. T186 and T210 each carry phosphothreonine. 3 consecutive EF-hand domains span residues 226–261 (MLQF…TVEN), 271–306 (WVRD…MNEF), and 307–342 (SALN…FTGS). D239, D241, D243, K245, and E250 together coordinate Ca(2+). Position 258 is a phosphothreonine (T258). D284, N286, and D288 together coordinate Ca(2+). At T292 the chain carries Phosphothreonine. Ca(2+)-binding residues include E295, D320, N322, N324, Y326, and E331. The segment at 302-355 (PMNEFSALNEAKQMIAIADENQNHYLEPEEVLKYSEFFTGSKLVDYARSVHEEF) is necessary for intracellular retention in Golgi apparatus lumen.

It belongs to the CREC family.

The protein localises to the golgi apparatus lumen. Its function is as follows. May regulate calcium-dependent activities in the endoplasmic reticulum lumen or post-ER compartment. The polypeptide is 45 kDa calcium-binding protein (SDF4) (Bos taurus (Bovine)).